The chain runs to 548 residues: Formyltransferase/hydrolase complex Fhc subunit A (548 aa).

Positions 57, 59, and 227 each coordinate Zn(2+).

This sequence belongs to the metallo-dependent hydrolases superfamily. FwdA/FmdA family. Octaheteromer. Part of the formyltransferase/hydrolase complex fhc; composed of FhcA, FhcB, FhcC and FhcD. It depends on Zn(2+) as a cofactor.

The protein localises to the cytoplasm. It catalyses the reaction N-formylmethanofuran + H2O = methanofuran + formate. It participates in one-carbon metabolism; formaldehyde degradation; formate from formaldehyde (H(4)MPT route): step 4/5. Involved in the transformation of 5-formyl tetrahydromethanopterin (5-formyl-H(4)MPT) to methanofuran (MFR) and formate via the formylmethanofuran (formyl-MFR). May be catalyze the hydrolysis of formylmethanofuran (formyl-MFR) to yield formate and MFR. This Methylorubrum extorquens (strain ATCC 14718 / DSM 1338 / JCM 2805 / NCIMB 9133 / AM1) (Methylobacterium extorquens) protein is Formyltransferase/hydrolase complex Fhc subunit A (fhcA).